The following is a 325-amino-acid chain: GMP reductase (325 aa).

The Thioimidate intermediate role is filled by Cys-174. 203 to 226 (IIADGGIRTHGDIAKSIRFGATMV) contributes to the NADP(+) binding site.

It belongs to the IMPDH/GMPR family. GuaC type 2 subfamily.

The enzyme catalyses IMP + NH4(+) + NADP(+) = GMP + NADPH + 2 H(+). Functionally, catalyzes the irreversible NADPH-dependent deamination of GMP to IMP. It functions in the conversion of nucleobase, nucleoside and nucleotide derivatives of G to A nucleotides, and in maintaining the intracellular balance of A and G nucleotides. This is GMP reductase from Helicobacter pylori (strain J99 / ATCC 700824) (Campylobacter pylori J99).